A 277-amino-acid polypeptide reads, in one-letter code: Orotidine 5'-phosphate decarboxylase (277 aa).

Substrate-binding positions include aspartate 40, 62–64, 93–102, tyrosine 229, and arginine 247; these read KTH and DRKFIDIGNT. The Proton donor role is filled by lysine 95.

This sequence belongs to the OMP decarboxylase family.

The catalysed reaction is orotidine 5'-phosphate + H(+) = UMP + CO2. It participates in pyrimidine metabolism; UMP biosynthesis via de novo pathway; UMP from orotate: step 2/2. The chain is Orotidine 5'-phosphate decarboxylase (pyrG) from Aspergillus oryzae (strain ATCC 42149 / RIB 40) (Yellow koji mold).